Reading from the N-terminus, the 382-residue chain is Small ribosomal subunit protein bS1 homolog (382 aa).

S1 motif domains follow at residues 18–85, 103–168, 189–257, and 274–343; these read GDVV…LSKR, GHVF…LSHK, GDVV…LSIK, and GDIR…LSIK. A Phosphoserine modification is found at S244.

The protein belongs to the bacterial ribosomal protein bS1 family.

This is Small ribosomal subunit protein bS1 homolog from Bacillus cereus (strain ATCC 10987 / NRS 248).